The sequence spans 81 residues: Conotoxin Vc6.13 (81 aa).

Residues 1–19 (MEKLTILLLVAAVLMSIQA) form the signal peptide. Residues 20-44 (LNQEQHQRAKINLLSKRKAPAERWW) constitute a propeptide that is removed on maturation. 3 cysteine pairs are disulfide-bonded: Cys-49-Cys-63, Cys-56-Cys-67, and Cys-62-Cys-72.

Belongs to the conotoxin O2 superfamily. In terms of tissue distribution, expressed by the venom duct.

The protein resides in the secreted. Functionally, inhibits voltage-gated ion channels. This Conus victoriae (Queen Victoria cone) protein is Conotoxin Vc6.13.